Reading from the N-terminus, the 293-residue chain is Formamidopyrimidine-DNA glycosylase (293 aa).

Pro-2 functions as the Schiff-base intermediate with DNA in the catalytic mechanism. Glu-3 acts as the Proton donor in catalysis. Lys-58 serves as the catalytic Proton donor; for beta-elimination activity. Residues His-104, Arg-123, and Arg-166 each contribute to the DNA site. The segment at 257–293 adopts an FPG-type zinc-finger fold; sequence KVYDREGEPCPTLRCKGHVQRIVQAGRSTFFCATCQR. Arg-283 acts as the Proton donor; for delta-elimination activity in catalysis.

This sequence belongs to the FPG family. As to quaternary structure, monomer. Zn(2+) is required as a cofactor.

It carries out the reaction Hydrolysis of DNA containing ring-opened 7-methylguanine residues, releasing 2,6-diamino-4-hydroxy-5-(N-methyl)formamidopyrimidine.. It catalyses the reaction 2'-deoxyribonucleotide-(2'-deoxyribose 5'-phosphate)-2'-deoxyribonucleotide-DNA = a 3'-end 2'-deoxyribonucleotide-(2,3-dehydro-2,3-deoxyribose 5'-phosphate)-DNA + a 5'-end 5'-phospho-2'-deoxyribonucleoside-DNA + H(+). In terms of biological role, involved in base excision repair of DNA damaged by oxidation or by mutagenic agents. Acts as a DNA glycosylase that recognizes and removes damaged bases. Has a preference for oxidized purines, such as 7,8-dihydro-8-oxoguanine (8-oxoG). Has AP (apurinic/apyrimidinic) lyase activity and introduces nicks in the DNA strand. Cleaves the DNA backbone by beta-delta elimination to generate a single-strand break at the site of the removed base with both 3'- and 5'-phosphates. This Azorhizobium caulinodans (strain ATCC 43989 / DSM 5975 / JCM 20966 / LMG 6465 / NBRC 14845 / NCIMB 13405 / ORS 571) protein is Formamidopyrimidine-DNA glycosylase.